Here is a 522-residue protein sequence, read N- to C-terminus: Maturase K (522 aa).

Belongs to the intron maturase 2 family. MatK subfamily.

The protein resides in the plastid. It is found in the chloroplast. Functionally, usually encoded in the trnK tRNA gene intron. Probably assists in splicing its own and other chloroplast group II introns. In Pillansia templemannii, this protein is Maturase K.